Consider the following 482-residue polypeptide: tRNA sulfurtransferase (482 aa).

Residues 61–165 (LAIRDALTRI…DDRLLLIKGR (105 aa)) form the THUMP domain. ATP is bound by residues 183 to 184 (LI), Lys265, Gly287, and Gln296. The cysteines at positions 344 and 456 are disulfide-linked. The 79-residue stretch at 404–482 (FGPNDVILDI…GFANVKVYRP (79 aa)) folds into the Rhodanese domain. The active-site Cysteine persulfide intermediate is Cys456.

The protein belongs to the ThiI family.

It localises to the cytoplasm. The enzyme catalyses [ThiI sulfur-carrier protein]-S-sulfanyl-L-cysteine + a uridine in tRNA + 2 reduced [2Fe-2S]-[ferredoxin] + ATP + H(+) = [ThiI sulfur-carrier protein]-L-cysteine + a 4-thiouridine in tRNA + 2 oxidized [2Fe-2S]-[ferredoxin] + AMP + diphosphate. It catalyses the reaction [ThiS sulfur-carrier protein]-C-terminal Gly-Gly-AMP + S-sulfanyl-L-cysteinyl-[cysteine desulfurase] + AH2 = [ThiS sulfur-carrier protein]-C-terminal-Gly-aminoethanethioate + L-cysteinyl-[cysteine desulfurase] + A + AMP + 2 H(+). It functions in the pathway cofactor biosynthesis; thiamine diphosphate biosynthesis. In terms of biological role, catalyzes the ATP-dependent transfer of a sulfur to tRNA to produce 4-thiouridine in position 8 of tRNAs, which functions as a near-UV photosensor. Also catalyzes the transfer of sulfur to the sulfur carrier protein ThiS, forming ThiS-thiocarboxylate. This is a step in the synthesis of thiazole, in the thiamine biosynthesis pathway. The sulfur is donated as persulfide by IscS. This Salmonella choleraesuis (strain SC-B67) protein is tRNA sulfurtransferase.